Here is a 197-residue protein sequence, read N- to C-terminus: Nucleoside triphosphate pyrophosphatase (197 aa).

The Proton acceptor role is filled by Asp72.

Belongs to the Maf family. Requires a divalent metal cation as cofactor.

It localises to the cytoplasm. It carries out the reaction a ribonucleoside 5'-triphosphate + H2O = a ribonucleoside 5'-phosphate + diphosphate + H(+). The catalysed reaction is a 2'-deoxyribonucleoside 5'-triphosphate + H2O = a 2'-deoxyribonucleoside 5'-phosphate + diphosphate + H(+). Functionally, nucleoside triphosphate pyrophosphatase. May have a dual role in cell division arrest and in preventing the incorporation of modified nucleotides into cellular nucleic acids. This is Nucleoside triphosphate pyrophosphatase from Corynebacterium glutamicum (strain ATCC 13032 / DSM 20300 / JCM 1318 / BCRC 11384 / CCUG 27702 / LMG 3730 / NBRC 12168 / NCIMB 10025 / NRRL B-2784 / 534).